The chain runs to 22 residues: Lantibiotic mutacin B-Ny266 (22 aa).

A cross-link (lanthionine (Ser-Cys)) is located at residues 3–7; it reads SWSFC. Serine 5 is subject to 2,3-didehydroalanine (Ser). The beta-methyllanthionine (Thr-Cys) cross-link spans 8–11; the sequence is TPGC. Residue threonine 14 is modified to 2,3-didehydrobutyrine. Positions 16 to 21 form a cross-link, lanthionine (Ser-Cys); the sequence is SFNSYC. The segment at residues 19–22 is a cross-link (S-(2-aminovinyl)-D-cysteine (Ser-Cys)); sequence SYCC.

Post-translationally, maturation of lantibiotics involves the enzymatic conversion of Thr, and Ser into dehydrated AA and the formation of thioether bonds with cysteine. The C-terminal lanthionine undergoes decarboxylation. This is followed by membrane translocation and cleavage of the modified precursor. In terms of processing, it is not established whether the 2,3-didehydrobutyrine is the E- or Z-isomer.

In terms of biological role, lanthionine-containing peptide antibiotic (lantibiotic) active on Gram-positive bacteria. The bactericidal activity of lantibiotics is based on depolarization of energized bacterial cytoplasmic membranes, initiated by the formation of aqueous transmembrane pores. This is Lantibiotic mutacin B-Ny266 from Streptococcus mutans.